A 526-amino-acid polypeptide reads, in one-letter code: Probable Xaa-Pro aminopeptidase MGG_05684 (526 aa).

Mn(2+)-binding residues include D285, D296, E447, and E488.

This sequence belongs to the peptidase M24B family. Mn(2+) serves as cofactor.

The enzyme catalyses Release of any N-terminal amino acid, including proline, that is linked to proline, even from a dipeptide or tripeptide.. Its function is as follows. Catalyzes the removal of a penultimate prolyl residue from the N-termini of peptides. This chain is Probable Xaa-Pro aminopeptidase MGG_05684, found in Pyricularia oryzae (strain 70-15 / ATCC MYA-4617 / FGSC 8958) (Rice blast fungus).